The following is a 1015-amino-acid chain: SPOC domain-containing protein 1 (1015 aa).

Disordered regions lie at residues 73-97, 118-159, 213-320, and 344-406; these read MVSP…SPVL, GFSL…EPGG, LYPE…PRLE, and AASS…MTPL. The span at 304–320 shows a compositional bias: basic and acidic residues; sequence SQDHAEGASKKDFPRLE. Positions 373–382 are enriched in polar residues; the sequence is AHPTPCQSDP. The span at 388 to 397 shows a compositional bias: basic and acidic residues; it reads AEPHQQRAED. The TFIIS central domain occupies 410-530; the sequence is VRSTVVRAMQ…IIEQQQKELY (121 aa). Residues 643-685 are disordered; the sequence is IQKAPGPAPASSPEVLKVGETPPKEPQDRLQMPAGLKNAPPSP. The 104-residue stretch at 688–791 folds into the SPOC domain; it reads WEGSLDMFSI…VQQVKMVLLP (104 aa). Disordered regions lie at residues 858–906 and 967–1015; these read PEDR…PGWG and QSQD…EHEC. The span at 967-978 shows a compositional bias: polar residues; that stretch reads QSQDSLPPSTVV.

Interacts with DNMT3A, DNMT3C and DNMT3L. Interacts with C19orf84 homolog. Interacts with SPIN1; promoting recruitment to transposons marked with histone H3 trimethylated at both 'Lys-4' and 'Lys-9' (H3K4me3K9me3).

The protein resides in the nucleus. It localises to the chromosome. Protein adapter that acts as an essential executor of PIWIL4-piRNA pathway directed transposon DNA methylation and silencing in the male embryonic germ cells. Recruited to young transposons, which are specifically marked with histone H3 trimethylated at both 'Lys-4' and 'Lys-9' (H3K4me3K9me3), via its association with SPIN1 chromatin reader, and associates with the de novo DNA methylation machinery and repressive chromatin remodeling complexes. Following this, PIWIL4 engages with nascent transposable element transcript to direct piRNA-directed DNA methylation. Not required for piRNA biosynthesis. The polypeptide is SPOC domain-containing protein 1 (Mus musculus (Mouse)).